The chain runs to 191 residues: Ribosome maturation factor RimM (191 aa).

The PRC barrel domain maps to 114–191 (EDEYYWVDLI…RIVVDWQPDY (78 aa)).

The protein belongs to the RimM family. In terms of assembly, binds ribosomal protein uS19.

The protein resides in the cytoplasm. Functionally, an accessory protein needed during the final step in the assembly of 30S ribosomal subunit, possibly for assembly of the head region. Essential for efficient processing of 16S rRNA. May be needed both before and after RbfA during the maturation of 16S rRNA. It has affinity for free ribosomal 30S subunits but not for 70S ribosomes. In Paracidovorax citrulli (strain AAC00-1) (Acidovorax citrulli), this protein is Ribosome maturation factor RimM.